Reading from the N-terminus, the 379-residue chain is UDP-4-amino-4-deoxy-L-arabinose--oxoglutarate aminotransferase (379 aa).

Lysine 182 carries the N6-(pyridoxal phosphate)lysine modification.

It belongs to the DegT/DnrJ/EryC1 family. ArnB subfamily. In terms of assembly, homodimer. Pyridoxal 5'-phosphate is required as a cofactor.

The enzyme catalyses UDP-4-amino-4-deoxy-beta-L-arabinose + 2-oxoglutarate = UDP-beta-L-threo-pentopyranos-4-ulose + L-glutamate. It participates in nucleotide-sugar biosynthesis; UDP-4-deoxy-4-formamido-beta-L-arabinose biosynthesis; UDP-4-deoxy-4-formamido-beta-L-arabinose from UDP-alpha-D-glucuronate: step 2/3. Its pathway is bacterial outer membrane biogenesis; lipopolysaccharide biosynthesis. Its function is as follows. Catalyzes the conversion of UDP-4-keto-arabinose (UDP-Ara4O) to UDP-4-amino-4-deoxy-L-arabinose (UDP-L-Ara4N). The modified arabinose is attached to lipid A and is required for resistance to polymyxin and cationic antimicrobial peptides. This is UDP-4-amino-4-deoxy-L-arabinose--oxoglutarate aminotransferase from Salmonella choleraesuis (strain SC-B67).